Consider the following 159-residue polypeptide: RNA pyrophosphohydrolase (159 aa).

The Nudix hydrolase domain maps to 6–149 (GYRPNVGIVI…KRNVYRRMMK (144 aa)). Positions 38-59 (GGINSGETAEQAMFRELFEEVG) match the Nudix box motif.

Belongs to the Nudix hydrolase family. RppH subfamily. A divalent metal cation serves as cofactor.

Its function is as follows. Accelerates the degradation of transcripts by removing pyrophosphate from the 5'-end of triphosphorylated RNA, leading to a more labile monophosphorylated state that can stimulate subsequent ribonuclease cleavage. This Baumannia cicadellinicola subsp. Homalodisca coagulata protein is RNA pyrophosphohydrolase.